The chain runs to 187 residues: MAIISSLANQLLIAMPSLKDPNFERSVVYLCEHNEQGSVGLIINRPLQFPLSIVFEQLQIEPIRVEKNGLPLLFGGPVQPERGFVIHKQMGGWRSSLFLQDEVTVTTSNDIIRAIAYDEGPKDVLITLGYAAWTEQQLEREIMSNTWLVCPYKSEILYEVPFEERWEYAGLTLGIKMNQLSSDAGHA.

The protein belongs to the UPF0301 (AlgH) family.

The protein is UPF0301 protein lpl0620 of Legionella pneumophila (strain Lens).